Here is a 415-residue protein sequence, read N- to C-terminus: Histidine--tRNA ligase (415 aa).

The protein belongs to the class-II aminoacyl-tRNA synthetase family. Homodimer.

The protein localises to the cytoplasm. It catalyses the reaction tRNA(His) + L-histidine + ATP = L-histidyl-tRNA(His) + AMP + diphosphate + H(+). In Gluconacetobacter diazotrophicus (strain ATCC 49037 / DSM 5601 / CCUG 37298 / CIP 103539 / LMG 7603 / PAl5), this protein is Histidine--tRNA ligase.